Here is a 434-residue protein sequence, read N- to C-terminus: Cytochrome P450 144 (434 aa).

Positions 124 and 128 each coordinate substrate. Residues Arg132, Arg326, His383, and Cys385 each coordinate heme.

Belongs to the cytochrome P450 family. Monomer. It depends on heme as a cofactor.

This chain is Cytochrome P450 144 (cyp144), found in Mycobacterium tuberculosis (strain CDC 1551 / Oshkosh).